The sequence spans 294 residues: Glucosamine kinase GspK (294 aa).

Threonine 12 serves as a coordination point for ATP. Aspartate 101 lines the substrate pocket. Threonine 122 is an ATP binding site. Residues 139–141 (GRE) and aspartate 146 contribute to the substrate site. Glycine 202 lines the ATP pocket.

Belongs to the eukaryotic-type N-acetylglucosamine kinase family.

The protein resides in the cytoplasm. It catalyses the reaction D-glucosamine + ATP = D-glucosamine 6-phosphate + ADP + H(+). ATP-dependent kinase, which is specific for glucosamine. Does not show kinase activity with any other sugar. The sequence is that of Glucosamine kinase GspK (gspK) from Vibrio cholerae serotype O1 (strain ATCC 39315 / El Tor Inaba N16961).